Here is a 308-residue protein sequence, read N- to C-terminus: Mycothiol acetyltransferase (308 aa).

N-acetyltransferase domains follow at residues 12–149 (DVLD…RPLG) and 165–308 (VTVR…RTET). Glu-43 lines the 1D-myo-inositol 2-(L-cysteinylamino)-2-deoxy-alpha-D-glucopyranoside pocket. Acetyl-CoA is bound at residue 88–90 (LVV). Glu-192, Lys-231, and Glu-240 together coordinate 1D-myo-inositol 2-(L-cysteinylamino)-2-deoxy-alpha-D-glucopyranoside. Acetyl-CoA-binding positions include 244–246 (VGV) and 251–257 (QGGGLGR). Residue Tyr-278 coordinates 1D-myo-inositol 2-(L-cysteinylamino)-2-deoxy-alpha-D-glucopyranoside.

The protein belongs to the acetyltransferase family. MshD subfamily. In terms of assembly, monomer.

It carries out the reaction 1D-myo-inositol 2-(L-cysteinylamino)-2-deoxy-alpha-D-glucopyranoside + acetyl-CoA = mycothiol + CoA + H(+). Its function is as follows. Catalyzes the transfer of acetyl from acetyl-CoA to desacetylmycothiol (Cys-GlcN-Ins) to form mycothiol. The protein is Mycothiol acetyltransferase of Streptomyces bingchenggensis (strain BCW-1).